The following is a 367-amino-acid chain: Alginate lyase (367 aa).

A signal peptide spans 1 to 24; that stretch reads MTIFKRISSPALLALALFGGAAHA. Residues 63 to 64, 136 to 137, and Y254 each bind substrate; these read SK and HT.

The protein belongs to the polysaccharide lyase 5 family.

The protein localises to the periplasm. It carries out the reaction Eliminative cleavage of alginate to give oligosaccharides with 4-deoxy-alpha-L-erythro-hex-4-enuronosyl groups at their non-reducing ends and beta-D-mannuronate at their reducing end.. Catalyzes the depolymerization of alginate by cleaving the beta-1,4 glycosidic bond between two adjacent sugar residues via a beta-elimination mechanism. May serve to degrade mislocalized alginate that is trapped in the periplasmic space. This Pseudomonas putida (strain ATCC 700007 / DSM 6899 / JCM 31910 / BCRC 17059 / LMG 24140 / F1) protein is Alginate lyase.